The chain runs to 134 residues: Tail assembly protein Gp24 (134 aa).

The protein belongs to the L5likevirus tail assembly protein family. As to quaternary structure, interacts with tail assembly protein Gp25 and tape measure protein.

In terms of biological role, promotes tail assembly by creating a scaffold for the tail tube proteins. The tail assembly proteins Gp24 and Gp25 would wrap the linear tape measure protein to create a tail assembly scaffold. It would allow polymerization of tail tube protein during which Gp24 and Gp25 are released and therefore are absent from the mature virion. The tail assembly protein Gp25 is produced by a rare -1 ribosomal frameshift. The ratio Gp24/Gp25 is important for proper tail assembly. The polypeptide is Tail assembly protein Gp24 (24) (Mycobacterium (Mycobacteriophage D29)).